The chain runs to 161 residues: Transcriptional repressor NrdR (161 aa).

A compositionally biased stretch (basic residues) spans 1 to 11 (MQCPHCQHHNS). The segment at 1-21 (MQCPHCQHHNSRVLESRSSEG) is disordered. The segment at 3 to 34 (CPHCQHHNSRVLESRSSEGGQSIRRRRECLEC) is a zinc-finger region. The ATP-cone domain maps to 49–139 (VTVIKQDGER…VYGRFQGIAD (91 aa)).

The protein belongs to the NrdR family. It depends on Zn(2+) as a cofactor.

Functionally, negatively regulates transcription of bacterial ribonucleotide reductase nrd genes and operons by binding to NrdR-boxes. In Synechocystis sp. (strain ATCC 27184 / PCC 6803 / Kazusa), this protein is Transcriptional repressor NrdR.